Reading from the N-terminus, the 224-residue chain is UPF0758 protein CJA_3522 (224 aa).

An MPN domain is found at 102–224 (LLSSPHLVRD…LVSLAERGWL (123 aa)). The Zn(2+) site is built by histidine 173, histidine 175, and aspartate 186. The short motif at 173–186 (HNHPSGLAEPSQAD) is the JAMM motif element.

It belongs to the UPF0758 family.

The sequence is that of UPF0758 protein CJA_3522 from Cellvibrio japonicus (strain Ueda107) (Pseudomonas fluorescens subsp. cellulosa).